We begin with the raw amino-acid sequence, 383 residues long: Succinyl-diaminopimelate desuccinylase (383 aa).

His-79 is a binding site for Zn(2+). Asp-81 is a catalytic residue. Asp-110 is a Zn(2+) binding site. Glu-141 functions as the Proton acceptor in the catalytic mechanism. The Zn(2+) site is built by Glu-142, Glu-170, and His-355.

It belongs to the peptidase M20A family. DapE subfamily. As to quaternary structure, homodimer. Zn(2+) serves as cofactor. The cofactor is Co(2+).

It carries out the reaction N-succinyl-(2S,6S)-2,6-diaminopimelate + H2O = (2S,6S)-2,6-diaminopimelate + succinate. The protein operates within amino-acid biosynthesis; L-lysine biosynthesis via DAP pathway; LL-2,6-diaminopimelate from (S)-tetrahydrodipicolinate (succinylase route): step 3/3. Its function is as follows. Catalyzes the hydrolysis of N-succinyl-L,L-diaminopimelic acid (SDAP), forming succinate and LL-2,6-diaminopimelate (DAP), an intermediate involved in the bacterial biosynthesis of lysine and meso-diaminopimelic acid, an essential component of bacterial cell walls. The protein is Succinyl-diaminopimelate desuccinylase of Helicobacter pylori (strain HPAG1).